A 233-amino-acid chain; its full sequence is MSGINGALVEDIKPDYSGVPGPALDSVRMRLAQLTHSLRRIRDDLSRADLTQWYSLQSQINVTLSQLMSVTSTLQHFEDTLDSTIVYPLPKFPTTSHESLLTTLLRKKNIPEVEEWIKDAIEASGVDTNMMRDDEIEKILEKNNEDSKWALEVFAKEFEKRESNGDTADDLDVLGNALKPVKTSVRQRAQSPFQVEDVLKYMSRGEVDRGSSSQEGLSTNNEQSGDKDIIMAD.

The interval 204–233 is disordered; the sequence is RGEVDRGSSSQEGLSTNNEQSGDKDIIMAD. The span at 210-223 shows a compositional bias: polar residues; it reads GSSSQEGLSTNNEQ. Residues 224–233 are compositionally biased toward basic and acidic residues; sequence SGDKDIIMAD.

Belongs to the Mediator complex subunit 8 family. As to quaternary structure, component of the Mediator complex.

It localises to the nucleus. Component of the Mediator complex, a coactivator involved in the regulated transcription of nearly all RNA polymerase II-dependent genes. Mediator functions as a bridge to convey information from gene-specific regulatory proteins to the basal RNA polymerase II transcription machinery. Mediator is recruited to promoters by direct interactions with regulatory proteins and serves as a scaffold for the assembly of a functional preinitiation complex with RNA polymerase II and the general transcription factors. In Candida glabrata (strain ATCC 2001 / BCRC 20586 / JCM 3761 / NBRC 0622 / NRRL Y-65 / CBS 138) (Yeast), this protein is Mediator of RNA polymerase II transcription subunit 8 (MED8).